A 377-amino-acid chain; its full sequence is uncharacterized protein (377 aa).

The N-terminal stretch at 1-22 (MKFKYGTVVLGSFLGLSVVLAA) is a signal peptide. Cysteine 23 carries the N-palmitoyl cysteine lipid modification. Cysteine 23 carries S-diacylglycerol cysteine lipidation. Residues 217–260 (AKANGETNQKGRKAAKSNKTALVQLKNGADTTTNEENKDTKTSD) are disordered. Basic and acidic residues predominate over residues 251-260 (EENKDTKTSD).

Belongs to the MG185/MG260 family.

The protein localises to the cell membrane. This is an uncharacterized protein from Mycoplasma pneumoniae (strain ATCC 29342 / M129 / Subtype 1) (Mycoplasmoides pneumoniae).